The following is a 429-amino-acid chain: Enolase (429 aa).

Residue Gln-163 coordinates (2R)-2-phosphoglycerate. The active-site Proton donor is Glu-205. Mg(2+)-binding residues include Asp-242, Glu-287, and Asp-314. (2R)-2-phosphoglycerate contacts are provided by Lys-339, Arg-368, Ser-369, and Lys-390. The active-site Proton acceptor is the Lys-339.

This sequence belongs to the enolase family. Mg(2+) is required as a cofactor.

The protein localises to the cytoplasm. Its subcellular location is the secreted. It is found in the cell surface. It carries out the reaction (2R)-2-phosphoglycerate = phosphoenolpyruvate + H2O. Its pathway is carbohydrate degradation; glycolysis; pyruvate from D-glyceraldehyde 3-phosphate: step 4/5. Its function is as follows. Catalyzes the reversible conversion of 2-phosphoglycerate (2-PG) into phosphoenolpyruvate (PEP). It is essential for the degradation of carbohydrates via glycolysis. The protein is Enolase of Salinibacter ruber (strain DSM 13855 / M31).